Here is a 483-residue protein sequence, read N- to C-terminus: MADLLRKVKSIKKKQDQSNHQALILGKYEMGRLLGHGTFAKVYLARNAQSGESVAIKVIDKEKVLKSGLIAHIKREISILRRVRHPNIVQLFEVMATKSKIYFVMEYVKGGELFNKVAKGRLKEEMARKYFQQLISAVSFCHFRGVYHRDLKPENLLLDENGNLKVSDFGLSAVSDQIRQDGLFHTFCGTPAYVAPEVLARKGYDGAKVDIWSCGVILFVLMAGFLPFHDRNVMAMYKKIYRGDFRCPRWFPVEINRLLIRMLETKPERRFTMPDIMETSWFKKGFKHIKFYVEDDHQLCNVADDDEIESIESVSGRSSTVSEPEDFESFDGRRRGGSMPRPASLNAFDLISFSPGFDLSGLFEDDGEGSRFVSGAPVGQIISKLEEIARIVSFTVRKKDCKVSLEGSREGSMKGPLSIAAEIFELTPALVVVEVKKKGGDKMEYDEFCNKELKPKLQNLSSENGQRVSGSRSLPSFLLSDTD.

Residues 28-282 enclose the Protein kinase domain; it reads YEMGRLLGHG…MPDIMETSWF (255 aa). ATP is bound by residues 34–42 and K57; that span reads LGHGTFAKV. Residue D150 is the Proton acceptor of the active site. The interval 168–197 is activation loop; the sequence is DFGLSAVSDQIRQDGLFHTFCGTPAYVAPE. Position 172 is a phosphoserine (S172). Position 186 is a phosphothreonine (T186). Residues 313–322 show a composition bias toward polar residues; sequence SVSGRSSTVS. Residues 313–338 form a disordered region; sequence SVSGRSSTVSEPEDFESFDGRRRGGS. Positions 340–364 constitute an NAF domain; the sequence is PRPASLNAFDLISFSPGFDLSGLFE. The segment at 367-396 is PPI; that stretch reads GEGSRFVSGAPVGQIISKLEEIARIVSFTV. The disordered stretch occupies residues 459–483; the sequence is NLSSENGQRVSGSRSLPSFLLSDTD.

This sequence belongs to the protein kinase superfamily. CAMK Ser/Thr protein kinase family. SNF1 subfamily. The cofactor is Mn(2+).

The enzyme catalyses L-seryl-[protein] + ATP = O-phospho-L-seryl-[protein] + ADP + H(+). It carries out the reaction L-threonyl-[protein] + ATP = O-phospho-L-threonyl-[protein] + ADP + H(+). CIPK serine-threonine protein kinases interact with CBL proteins. Binding of a CBL protein to the regulatory NAF domain of CIPK protein lead to the activation of the kinase in a calcium-dependent manner. The chain is CBL-interacting serine/threonine-protein kinase 19 (CIPK19) from Arabidopsis thaliana (Mouse-ear cress).